The primary structure comprises 391 residues: Phosphoglycerate kinase (391 aa).

Substrate is bound by residues 21–23, Arg36, 59–62, Arg113, and Arg146; these read DLN and HLGR. ATP is bound by residues Lys197, Glu319, and 345–348; that span reads GGDT.

This sequence belongs to the phosphoglycerate kinase family. In terms of assembly, monomer.

The protein resides in the cytoplasm. The catalysed reaction is (2R)-3-phosphoglycerate + ATP = (2R)-3-phospho-glyceroyl phosphate + ADP. Its pathway is carbohydrate degradation; glycolysis; pyruvate from D-glyceraldehyde 3-phosphate: step 2/5. The polypeptide is Phosphoglycerate kinase (Xanthomonas oryzae pv. oryzae (strain PXO99A)).